A 208-amino-acid chain; its full sequence is Uracil phosphoribosyltransferase (208 aa).

5-phospho-alpha-D-ribose 1-diphosphate is bound by residues R78, R103, and 130–138 (DPMLATGGS). Uracil-binding positions include I193 and 198–200 (GDA). D199 is a binding site for 5-phospho-alpha-D-ribose 1-diphosphate.

It belongs to the UPRTase family. It depends on Mg(2+) as a cofactor.

The enzyme catalyses UMP + diphosphate = 5-phospho-alpha-D-ribose 1-diphosphate + uracil. It participates in pyrimidine metabolism; UMP biosynthesis via salvage pathway; UMP from uracil: step 1/1. Allosterically activated by GTP. In terms of biological role, catalyzes the conversion of uracil and 5-phospho-alpha-D-ribose 1-diphosphate (PRPP) to UMP and diphosphate. In Vibrio parahaemolyticus serotype O3:K6 (strain RIMD 2210633), this protein is Uracil phosphoribosyltransferase.